Consider the following 336-residue polypeptide: Acetyl-coenzyme A carboxylase carboxyl transferase subunit beta (336 aa).

The CoA carboxyltransferase N-terminal domain maps to 27–297 (LWTKCESCQG…VAPAPAPAAT (271 aa)). 4 residues coordinate Zn(2+): cysteine 31, cysteine 34, cysteine 50, and cysteine 53. Residues 31 to 53 (CESCQGILYRPDLERNLEVCPKC) form a C4-type zinc finger. A disordered region spans residues 287 to 336 (SVAPAPAPAATVDPEPESAEPEAPAEEAGPAGAAGDQAGESQDEGDPRNA). The span at 300–311 (PEPESAEPEAPA) shows a compositional bias: acidic residues. The segment covering 312 to 326 (EEAGPAGAAGDQAGE) has biased composition (low complexity).

The protein belongs to the AccD/PCCB family. As to quaternary structure, acetyl-CoA carboxylase is a heterohexamer composed of biotin carboxyl carrier protein (AccB), biotin carboxylase (AccC) and two subunits each of ACCase subunit alpha (AccA) and ACCase subunit beta (AccD). Zn(2+) is required as a cofactor.

Its subcellular location is the cytoplasm. The catalysed reaction is N(6)-carboxybiotinyl-L-lysyl-[protein] + acetyl-CoA = N(6)-biotinyl-L-lysyl-[protein] + malonyl-CoA. The protein operates within lipid metabolism; malonyl-CoA biosynthesis; malonyl-CoA from acetyl-CoA: step 1/1. Its function is as follows. Component of the acetyl coenzyme A carboxylase (ACC) complex. Biotin carboxylase (BC) catalyzes the carboxylation of biotin on its carrier protein (BCCP) and then the CO(2) group is transferred by the transcarboxylase to acetyl-CoA to form malonyl-CoA. The chain is Acetyl-coenzyme A carboxylase carboxyl transferase subunit beta from Halorhodospira halophila (strain DSM 244 / SL1) (Ectothiorhodospira halophila (strain DSM 244 / SL1)).